The following is a 307-amino-acid chain: MTLTEIIFVLTGTCAILVFGGKIASLIMMLITKLFCPLPEAFFTSLGKWAVITGGSDGIGRAYAEELSKQGMSVIIISRNQEKLDRAAKKIELNTGGKVKVIAADFTKDDIYGHITENIEGLDIGVLVNNVGILPSQIPCKLLETSDLEERIYDIVNCNVKSMVKMCRIVLPGMQQRRRGVILNVSSGIAKIPCPIYTLYAASKVFVERFSQGLQAEYISKGIIIQTVAPFGVSTAMTGHQKPDMVTFTAEEFVRSSLKYLKTGDQTYGSITHTLLGRIVQSIPTWVLQSETFQHHFQEYVKNRDRR.

Residues 6–26 traverse the membrane as a helical segment; it reads IIFVLTGTCAILVFGGKIASL. NADP(+) is bound at residue 47–76; that stretch reads GKWAVITGGSDGIGRAYAEELSKQGMSVII. Substrate is bound at residue Ser187. Catalysis depends on Tyr200, which acts as the Proton acceptor.

It belongs to the short-chain dehydrogenases/reductases (SDR) family. As to expression, expression shows strong sexual dimorphism. In female, highly expressed in ovaries, and at lower levels in skin muscle, eyes and liver. In males, strongly expressed in liver and at lower levels in testis, spleen, kidney, intestine and muscle.

The protein resides in the endoplasmic reticulum. Its subcellular location is the membrane. The enzyme catalyses a 17beta-hydroxy steroid + NADP(+) = a 17-oxo steroid + NADPH + H(+). The catalysed reaction is testosterone + NADP(+) = androst-4-ene-3,17-dione + NADPH + H(+). It carries out the reaction 3beta-hydroxyandrost-5-en-17-one + NADPH + H(+) = androst-5-en-3beta,17beta-diol + NADP(+). It catalyses the reaction 3beta-hydroxy-5alpha-androstan-17-one + NADPH + H(+) = 5alpha-androstane-3beta,17beta-diol + NADP(+). The enzyme catalyses androst-4-ene-3,11,17-trione + NADPH + H(+) = 17beta-hydroxyandrost-4-ene-3,11-dione + NADP(+). The catalysed reaction is 11beta-hydroxyandrost-4-ene-3,17-dione + NADPH + H(+) = 11beta,17beta-dihydroxyandrost-4-ene-3-one + NADP(+). The protein operates within hormone biosynthesis; testosterone biosynthesis. It participates in steroid metabolism. Its function is as follows. Catalyzes the conversion of 17-oxosteroids to 17beta-hydroxysteroids in the presence of NADPH. Favors the reduction of androstenedione to testosterone. Testosterone is the key androgen driving male development and function. Among further tested androgens epiandrosterone and dehydroepiandrosterone are accepted as substrates and reduced at C-17. Can also reduce 11-ketoandrostenedione as well as 11beta-hydroxyandrostenedione at C-17 to the respective testosterone forms. Cannot use androsterone and androstanedione as substrates. The protein is 17-beta-hydroxysteroid dehydrogenase type 3 (hsd17b3) of Danio rerio (Zebrafish).